Consider the following 72-residue polypeptide: Conotoxin im23a (72 aa).

An N-terminal signal peptide occupies residues Met-1 to Gly-22. Positions Asp-23–Ala-28 are excised as a propeptide. Disulfide bonds link Cys-34–Cys-41, Cys-45–Cys-55, and Cys-56–Cys-71.

Belongs to the conotoxin K superfamily. Expressed by the venom duct.

It is found in the secreted. Neurotoxin that induces excitatory symptoms in mice following intracranial administration. No symptoms are observed after intraperitoneal and intravenous (tail vein) injections. This Conus imperialis (Imperial cone) protein is Conotoxin im23a.